Reading from the N-terminus, the 76-residue chain is uncharacterized protein (76 aa).

This is an uncharacterized protein from Sulfolobus islandicus rod-shaped virus 1 (SIRV-1).